The primary structure comprises 359 residues: Nicotinate-nucleotide--dimethylbenzimidazole phosphoribosyltransferase (359 aa).

Glu318 (proton acceptor) is an active-site residue.

The protein belongs to the CobT family. As to quaternary structure, homodimer.

The enzyme catalyses 5,6-dimethylbenzimidazole + nicotinate beta-D-ribonucleotide = alpha-ribazole 5'-phosphate + nicotinate + H(+). It participates in nucleoside biosynthesis; alpha-ribazole biosynthesis; alpha-ribazole from 5,6-dimethylbenzimidazole: step 1/2. Its function is as follows. Catalyzes the synthesis of alpha-ribazole-5'-phosphate from nicotinate mononucleotide (NAMN) and 5,6-dimethylbenzimidazole (DMB). This is Nicotinate-nucleotide--dimethylbenzimidazole phosphoribosyltransferase from Shigella sonnei (strain Ss046).